The primary structure comprises 348 residues: Erlin-1 (348 aa).

The Cytoplasmic segment spans residues Met1–Arg7. Residues Leu8–Ile28 form a helical membrane-spanning segment. Topologically, residues Glu29 to Gly348 are lumenal. Residue Asn108 is glycosylated (N-linked (GlcNAc...) asparagine). Lys269 carries the post-translational modification N6-acetyllysine. Residues Asp318–Ser336 show a composition bias toward basic and acidic residues. Residues Asp318 to Gly348 form a disordered region. Residues Ser339–Gly348 are compositionally biased toward polar residues.

The protein belongs to the band 7/mec-2 family. Forms a heteromeric complex with ERLIN2. In complex with ERLIN2, interacts with RNF170. Interacts with AMFR and SYVN1. Deubiquitinated by USP25; leading to stabilization.

Its subcellular location is the endoplasmic reticulum membrane. Component of the ERLIN1/ERLIN2 complex which mediates the endoplasmic reticulum-associated degradation (ERAD) of inositol 1,4,5-trisphosphate receptors (IP3Rs). Involved in regulation of cellular cholesterol homeostasis by regulation the SREBP signaling pathway. Binds cholesterol and may promote ER retention of the SCAP-SREBF complex. This chain is Erlin-1, found in Mus musculus (Mouse).